The following is a 373-amino-acid chain: Homoserine O-acetyltransferase (373 aa).

Residues 46-355 enclose the AB hydrolase-1 domain; sequence NAILICHPLT…NPNGHDSFLL (310 aa). Ser-151 functions as the Nucleophile in the catalytic mechanism. Arg-221 serves as a coordination point for substrate. Residues Asp-317 and His-350 contribute to the active site. Asp-351 is a binding site for substrate.

It belongs to the AB hydrolase superfamily. MetX family. Homodimer.

It localises to the cytoplasm. The enzyme catalyses L-homoserine + acetyl-CoA = O-acetyl-L-homoserine + CoA. Its pathway is amino-acid biosynthesis; L-methionine biosynthesis via de novo pathway; O-acetyl-L-homoserine from L-homoserine: step 1/1. Functionally, transfers an acetyl group from acetyl-CoA to L-homoserine, forming acetyl-L-homoserine. This Zymomonas mobilis subsp. mobilis (strain ATCC 31821 / ZM4 / CP4) protein is Homoserine O-acetyltransferase.